The following is a 351-amino-acid chain: Ion-translocating oxidoreductase complex subunit D (351 aa).

Helical transmembrane passes span 18 to 38 (IMLL…YFFG), 42 to 62 (LIQV…VLHL), 87 to 107 (LPPL…IIIA), and 121 to 141 (PAMV…TSWL). Threonine 185 bears the FMN phosphoryl threonine mark. 5 helical membrane passes run 212 to 232 (LAGI…LLLL), 241 to 261 (IPVS…MIAP), 264 to 284 (FAPP…FFIA), 298 to 318 (LIFG…GGYP), and 320 to 340 (GVAF…HYTQ).

The protein belongs to the NqrB/RnfD family. The complex is composed of six subunits: RnfA, RnfB, RnfC, RnfD, RnfE and RnfG. It depends on FMN as a cofactor.

The protein localises to the cell inner membrane. Its function is as follows. Part of a membrane-bound complex that couples electron transfer with translocation of ions across the membrane. The sequence is that of Ion-translocating oxidoreductase complex subunit D from Yersinia enterocolitica serotype O:8 / biotype 1B (strain NCTC 13174 / 8081).